A 243-amino-acid chain; its full sequence is MTYHLRVADLPSSDRPREKLLAQGARYLTSAELIAILLGTGQGAGKLSAIGLGQYILQQLGQHQRDPLAVLREITPQELMAIPGIGPAKATTILAAIELGKRVFQSKPTEQTIINDPAVAAAALGSELFWQAQEKFAVLLLDVRHRLIGTQVITIGTATETIAHPRDIFREVIRQGATRVIVAHNHPSGNVEPSPEDLALTQQLLSGAKFLDIPLLDHLILGNGNFRSLRQTTKLWEECPQGD.

Residues 112–235 enclose the MPN domain; sequence TIINDPAVAA…FRSLRQTTKL (124 aa). 3 residues coordinate Zn(2+): histidine 184, histidine 186, and aspartate 197. Positions 184 to 197 match the JAMM motif motif; that stretch reads HNHPSGNVEPSPED.

It belongs to the UPF0758 family.

The chain is UPF0758 protein Cyan7425_1778 from Cyanothece sp. (strain PCC 7425 / ATCC 29141).